A 384-amino-acid chain; its full sequence is Galactokinase (384 aa).

Residue 34–37 coordinates substrate; it reads EHTD. 123 to 129 contacts ATP; the sequence is SSGLSSS. Mg(2+)-binding residues include Ser129 and Glu161. The active-site Proton acceptor is Asp173. A substrate-binding site is contributed by Tyr222.

This sequence belongs to the GHMP kinase family. GalK subfamily.

It is found in the cytoplasm. It catalyses the reaction alpha-D-galactose + ATP = alpha-D-galactose 1-phosphate + ADP + H(+). Its pathway is carbohydrate metabolism; galactose metabolism. Functionally, catalyzes the transfer of the gamma-phosphate of ATP to D-galactose to form alpha-D-galactose-1-phosphate (Gal-1-P). The sequence is that of Galactokinase from Actinobacillus pleuropneumoniae serotype 3 (strain JL03).